Here is a 305-residue protein sequence, read N- to C-terminus: Glycine cleavage system transcriptional activator (305 aa).

Positions 6–63 (PPLNALRVFDAAARHLSFTRAAEELFVTQAAVSHQIKSLEDFLGLKLFRRRNRSLLLT) constitute an HTH lysR-type domain. Positions 23-42 (FTRAAEELFVTQAAVSHQIK) form a DNA-binding region, H-T-H motif.

It belongs to the LysR transcriptional regulatory family.

It is found in the cytoplasm. Regulatory protein for the glycine cleavage system operon (gcv). Mediates activation of gcv by glycine and repression by purines. GcvA is negatively autoregulated. Binds to three sites upstream of the gcv promoter. The chain is Glycine cleavage system transcriptional activator (gcvA) from Escherichia coli O157:H7.